Here is a 388-residue protein sequence, read N- to C-terminus: Succinate--CoA ligase [ADP-forming] subunit beta (388 aa).

Positions 9-244 (KQLFAEYGLP…PSQDDPREAH (236 aa)) constitute an ATP-grasp domain. ATP contacts are provided by residues Lys46, 53–55 (GRG), Glu99, Thr102, and Glu107. Mg(2+)-binding residues include Asn199 and Asp213. Residues Asn264 and 321–323 (GIV) contribute to the substrate site.

Belongs to the succinate/malate CoA ligase beta subunit family. In terms of assembly, heterotetramer of two alpha and two beta subunits. It depends on Mg(2+) as a cofactor.

The catalysed reaction is succinate + ATP + CoA = succinyl-CoA + ADP + phosphate. It carries out the reaction GTP + succinate + CoA = succinyl-CoA + GDP + phosphate. It participates in carbohydrate metabolism; tricarboxylic acid cycle; succinate from succinyl-CoA (ligase route): step 1/1. Its function is as follows. Succinyl-CoA synthetase functions in the citric acid cycle (TCA), coupling the hydrolysis of succinyl-CoA to the synthesis of either ATP or GTP and thus represents the only step of substrate-level phosphorylation in the TCA. The beta subunit provides nucleotide specificity of the enzyme and binds the substrate succinate, while the binding sites for coenzyme A and phosphate are found in the alpha subunit. The protein is Succinate--CoA ligase [ADP-forming] subunit beta of Pseudomonas syringae pv. tomato (strain ATCC BAA-871 / DC3000).